A 162-amino-acid chain; its full sequence is Ciliary microtubule inner protein 5 (162 aa).

The tract at residues 1–44 (MGSHPTPGLQRTTSAGYRLPPTRPPASVSPAARGGPMASRGLAG) is disordered.

The protein resides in the cell projection. The protein localises to the cilium. The sequence is that of Ciliary microtubule inner protein 5 from Homo sapiens (Human).